Reading from the N-terminus, the 733-residue chain is Zinc finger transcription factor ace1 (733 aa).

Residues 1 to 11 (MSFSNPRRRTP) show a composition bias toward basic residues. Disordered regions lie at residues 1–22 (MSFSNPRRRTPVTRPGTDCEHG), 34–63 (GATFHSPTSPSASSAAGDFVPPTLTRSQSA), and 89–183 (ASLS…SSTT). The segment covering 39–49 (SPTSPSASSAA) has biased composition (low complexity). Over residues 132 to 142 (LRPRSVRRTRN) the composition is skewed to basic residues. Residues 148–158 (GIGSSVVSTND) are compositionally biased toward polar residues. Residues 171-183 (ASALTRSAASSTT) show a composition bias toward low complexity. C2H2-type zinc fingers lie at residues 400–424 (KKCREPGCTKEFKRPCDLTKHEKTH), 428–456 (WKCPIPTCKYHEYGWPTEKEMDRHINDKH), and 463–488 (YECLFKPCPYKSKRESNCKQHMEKAH). The disordered stretch occupies residues 497–533 (TNGKKAPSQNGSTAQQTPPLANVSTPSSTPSYSVPTP). A compositionally biased stretch (polar residues) spans 503–515 (PSQNGSTAQQTPP). Residues 519–530 (VSTPSSTPSYSV) show a composition bias toward low complexity.

It is found in the nucleus. Functionally, binds to the promoter of the cbh1 gene and activates transcription. This chain is Zinc finger transcription factor ace1 (ace1), found in Hypocrea jecorina (Trichoderma reesei).